The sequence spans 95 residues: UPF0358 protein BcerKBAB4_3775 (95 aa).

It belongs to the UPF0358 family.

In Bacillus mycoides (strain KBAB4) (Bacillus weihenstephanensis), this protein is UPF0358 protein BcerKBAB4_3775.